The following is a 165-amino-acid chain: Crossover junction endodeoxyribonuclease RuvC (165 aa).

Active-site residues include Asp-8, Glu-67, and Asp-139. Mg(2+) is bound by residues Asp-8, Glu-67, and Asp-139.

Belongs to the RuvC family. As to quaternary structure, homodimer which binds Holliday junction (HJ) DNA. The HJ becomes 2-fold symmetrical on binding to RuvC with unstacked arms; it has a different conformation from HJ DNA in complex with RuvA. In the full resolvosome a probable DNA-RuvA(4)-RuvB(12)-RuvC(2) complex forms which resolves the HJ. Mg(2+) is required as a cofactor.

The protein localises to the cytoplasm. It carries out the reaction Endonucleolytic cleavage at a junction such as a reciprocal single-stranded crossover between two homologous DNA duplexes (Holliday junction).. Functionally, the RuvA-RuvB-RuvC complex processes Holliday junction (HJ) DNA during genetic recombination and DNA repair. Endonuclease that resolves HJ intermediates. Cleaves cruciform DNA by making single-stranded nicks across the HJ at symmetrical positions within the homologous arms, yielding a 5'-phosphate and a 3'-hydroxyl group; requires a central core of homology in the junction. The consensus cleavage sequence is 5'-(A/T)TT(C/G)-3'. Cleavage occurs on the 3'-side of the TT dinucleotide at the point of strand exchange. HJ branch migration catalyzed by RuvA-RuvB allows RuvC to scan DNA until it finds its consensus sequence, where it cleaves and resolves the cruciform DNA. In Alkalilimnicola ehrlichii (strain ATCC BAA-1101 / DSM 17681 / MLHE-1), this protein is Crossover junction endodeoxyribonuclease RuvC.